Here is a 69-residue protein sequence, read N- to C-terminus: UPF0291 protein CD630_10710 (69 aa).

It belongs to the UPF0291 family.

It is found in the cytoplasm. The sequence is that of UPF0291 protein CD630_10710 from Clostridioides difficile (strain 630) (Peptoclostridium difficile).